Reading from the N-terminus, the 530-residue chain is B3 domain-containing protein REM-like 3 (530 aa).

DNA-binding regions (TF-B3) lie at residues 11-103 (KPHF…FGLS) and 144-241 (DFVV…FPLE). The tract at residues 251-276 (SKKVKQEVEHEESVKEETNVESGKLK) is disordered. A compositionally biased stretch (basic and acidic residues) spans 254 to 276 (VKQEVEHEESVKEETNVESGKLK). 2 DNA-binding regions (TF-B3) span residues 296–393 (NFVV…FPLE) and 431–530 (SFVV…WDKK).

It is found in the nucleus. The protein is B3 domain-containing protein REM-like 3 of Arabidopsis thaliana (Mouse-ear cress).